The sequence spans 494 residues: MSHEELNDQLRVRREKLKKIEELGVDPFGKRFERTHKAEELFELYGDLSKEELEEQQIEVAVAGRIMTKRGMGKAGFAHIQDVTGQIQIYVRQDDVGEQQYELFKISDLGDIVGVRGTMFKTKVGELSIKVSSYEFLTKALRPLPEKYHGLKDIEQRYRQRYLDLIMNPESKKTFITRSLIIQSMRRYLDSHGYLEVETPMMHAVAGGAAARPFITHHNALDMTLYMRIAIELHLKRLIVGGLEKVYEIGRVFRNEGISTRHNPEFTMLELYEAYADFRDIMKLTENLIAHIATEVLGTTKIQYGEHLVDLTPEWRRLHMVDAIKEYVGVDFWRQMSDEEARELAKEHGVEVAPHMTFGHIVNEFFEQKVEDKLIQPTFIYGHPVEISPLAKKNPDDPRFTDRFELFIVGREHANAFTELNDPIDQRQRFEEQLKEREQGNDEAHEMDEDFLEALEYGMPPTGGLGIGVDRLVMLLTNSPSIRDVLLFPQMRHK.

Glutamate 405 and glutamate 412 together coordinate Mg(2+).

Belongs to the class-II aminoacyl-tRNA synthetase family. In terms of assembly, homodimer. Mg(2+) is required as a cofactor.

It localises to the cytoplasm. It catalyses the reaction tRNA(Lys) + L-lysine + ATP = L-lysyl-tRNA(Lys) + AMP + diphosphate. This chain is Lysine--tRNA ligase (lysS), found in Geobacillus stearothermophilus (Bacillus stearothermophilus).